The primary structure comprises 226 residues: Phosphoheptose isomerase (226 aa).

One can recognise an SIS domain in the interval 50–212 (IAGVFETGGK…ERMMGYGTEC (163 aa)). 65 to 67 (NGG) contacts substrate. The Zn(2+) site is built by His74 and Glu78. Residues Glu78, 109–110 (ND), 135–137 (STS), Ser140, and Gln188 contribute to the substrate site. Gln188 and His196 together coordinate Zn(2+).

This sequence belongs to the SIS family. GmhA subfamily. Zn(2+) serves as cofactor.

The protein resides in the cytoplasm. The catalysed reaction is 2 D-sedoheptulose 7-phosphate = D-glycero-alpha-D-manno-heptose 7-phosphate + D-glycero-beta-D-manno-heptose 7-phosphate. It participates in carbohydrate biosynthesis; D-glycero-D-manno-heptose 7-phosphate biosynthesis; D-glycero-alpha-D-manno-heptose 7-phosphate and D-glycero-beta-D-manno-heptose 7-phosphate from sedoheptulose 7-phosphate: step 1/1. Functionally, catalyzes the isomerization of sedoheptulose 7-phosphate in D-glycero-D-manno-heptose 7-phosphate. The protein is Phosphoheptose isomerase of Chlorobium phaeobacteroides (strain DSM 266 / SMG 266 / 2430).